A 1315-amino-acid chain; its full sequence is MLDVNFFDELRIGLATADDIRQWSYGEVKKPETINYRTLKPEKDGLFCEKIFGPTRDWECYCGKYKRVRFKGIICERCGVEVTRAKVRRERMGHIELAAPVTHIWYFKGVPSRLGYLLDLAPKDLEKIIYFAAYVITDVNDEMRHNELSTLEAEMVVEKKAVEDQRDADLEARAQKLEADLAELEAEGAKSDVRRKVRDGGEREMRQLRDRAQRELDRLDEIWTTFTKLAPKQLIVDEVLYRELVDRYGEYFTGAMGAESIKKLIENFDIEAEAENLRETIRSGKGQKKLRALKRLKVVAAFQTNRNSPMGMVLDAVPVIPPELRPMVQLDGGRFATSDLNDLYRRVINRNNRLKRLIDLGAPEIIVNNEKRMLQESVDALFDNGRRGRPVTGPGNRPLKSLSDLLKGKQGRFRQNLLGKRVDYSGRSVIVVGPQLKLHQCGLPKLMALELFKPFVMKRLVDLNHAQNIKSAKRMVERQRPQVWDVLEEVIAEHPVLLNRAPTLHRLGIQAFEPQLVEGKAIQLHPLVCEAFNADFDGDQMAVHLPLSAEAQAEARILMLSSNNILSPASGKPLAMPRLDMVTGLYFLTTMIEGDKGEYRPAATDQPEEGVYSSPAEAIMAMDRGALSVRAKIKVRLTQLRPPAALEAELFENGWKPGLAWTAETTLGRVMFNELLPISYPFINEQMHKKVQARIINDLAERFPMIVVAQTVDKLKDAGFHWATRSGVTVSMADVLVPPQKQEILDRYEAEADGIERKYQRGALNHKERNDSLVKIWQDATEEVGKALEEHYPADNPIITIVKSGATGNFTQTRTLAGMKGLVTNPKGEFIPRPIKSSFREGLTVLEYFINTHGARKGLADTALRTADSGYLTRRLVDVSQDVIVREHDCETERGINVTLAERQPDGSLIRDPHVETSAFARTLATDAVDADGNVVIERGHDLGDPAIDKLLAAGIDHVKVRSVLTCASATGVCAMCYGRSMATGKLVDIGEAVGIVAAQSIGEPGTQLTMRTFHQGGVGEDITGGLPRVQELFEARVPRNKAPIADVSGRVQLEEGERFYKITIVPDDGGEEVVYDKLSKRQRLRVIKHEDGSEGVLSDGDHVEVGDQLMEGSADPHEVLRVQGPREVQIHLVHEVQEVYRAQGVSIHDKHIEVIVRQMLRRVTIIDSGATEFLPGSLTERAEFESENRRVVAEGGEPAAGRPVLMGITKASLATDSWLSAASFQETTRVLTDAAINCRSDKLQGLKENVIIGKLIPAGTGINRYRNIQVQPTEEARAAAYTIPSYEDQYYSPDFGQATGAAVPLDDYGYSDYR.

Positions 60, 62, 75, and 78 each coordinate Zn(2+). 3 residues coordinate Mg(2+): D535, D537, and D539. The Zn(2+) site is built by C890, C967, C974, and C977.

Belongs to the RNA polymerase beta' chain family. The RNAP catalytic core consists of 2 alpha, 1 beta, 1 beta' and 1 omega subunit. When a sigma factor is associated with the core the holoenzyme is formed, which can initiate transcription. It depends on Mg(2+) as a cofactor. Zn(2+) serves as cofactor.

The catalysed reaction is RNA(n) + a ribonucleoside 5'-triphosphate = RNA(n+1) + diphosphate. Its function is as follows. DNA-dependent RNA polymerase catalyzes the transcription of DNA into RNA using the four ribonucleoside triphosphates as substrates. This chain is DNA-directed RNA polymerase subunit beta', found in Mycobacterium sp. (strain MCS).